Reading from the N-terminus, the 82-residue chain is Small ribosomal subunit protein uS17 (82 aa).

The protein belongs to the universal ribosomal protein uS17 family. As to quaternary structure, part of the 30S ribosomal subunit.

Its function is as follows. One of the primary rRNA binding proteins, it binds specifically to the 5'-end of 16S ribosomal RNA. This Rickettsia typhi (strain ATCC VR-144 / Wilmington) protein is Small ribosomal subunit protein uS17.